The sequence spans 277 residues: 3-methyl-2-oxobutanoate hydroxymethyltransferase (277 aa).

The Mg(2+) site is built by D49 and D88. 3-methyl-2-oxobutanoate is bound by residues D49 to S50, D88, and K118. A Mg(2+)-binding site is contributed by E120. The Proton acceptor role is filled by E186.

It belongs to the PanB family. In terms of assembly, homodecamer; pentamer of dimers. Mg(2+) is required as a cofactor.

It localises to the cytoplasm. The catalysed reaction is 3-methyl-2-oxobutanoate + (6R)-5,10-methylene-5,6,7,8-tetrahydrofolate + H2O = 2-dehydropantoate + (6S)-5,6,7,8-tetrahydrofolate. It functions in the pathway cofactor biosynthesis; (R)-pantothenate biosynthesis; (R)-pantoate from 3-methyl-2-oxobutanoate: step 1/2. In terms of biological role, catalyzes the reversible reaction in which hydroxymethyl group from 5,10-methylenetetrahydrofolate is transferred onto alpha-ketoisovalerate to form ketopantoate. The sequence is that of 3-methyl-2-oxobutanoate hydroxymethyltransferase from Cereibacter sphaeroides (strain ATCC 17029 / ATH 2.4.9) (Rhodobacter sphaeroides).